Consider the following 541-residue polypeptide: ATP synthase subunit alpha (541 aa).

Residue 169–176 (GDRQTGKT) coordinates ATP. The disordered stretch occupies residues 506–541 (NTLLNVEEGDTGEEENNEGHNKAEQDTEEKDTEEVV). Acidic residues-rich tracts occupy residues 512–521 (EEGDTGEEEN) and 531–541 (DTEEKDTEEVV).

It belongs to the ATPase alpha/beta chains family. In terms of assembly, F-type ATPases have 2 components, CF(1) - the catalytic core - and CF(0) - the membrane proton channel. CF(1) has five subunits: alpha(3), beta(3), gamma(1), delta(1), epsilon(1). CF(0) has three main subunits: a(1), b(2) and c(9-12). The alpha and beta chains form an alternating ring which encloses part of the gamma chain. CF(1) is attached to CF(0) by a central stalk formed by the gamma and epsilon chains, while a peripheral stalk is formed by the delta and b chains.

It is found in the cell inner membrane. The catalysed reaction is ATP + H2O + 4 H(+)(in) = ADP + phosphate + 5 H(+)(out). Functionally, produces ATP from ADP in the presence of a proton gradient across the membrane. The alpha chain is a regulatory subunit. This Halothermothrix orenii (strain H 168 / OCM 544 / DSM 9562) protein is ATP synthase subunit alpha.